The chain runs to 674 residues: DNA ligase (674 aa).

NAD(+)-binding positions include 36-40 (DSVYD), 85-86 (SL), and Glu116. Lys118 serves as the catalytic N6-AMP-lysine intermediate. The NAD(+) site is built by Arg139, Glu176, Lys292, and Lys316. 4 residues coordinate Zn(2+): Cys410, Cys413, Cys428, and Cys433. One can recognise a BRCT domain in the interval 596–674 (PSSGNIAGKT…EADLLKFLTN (79 aa)).

It belongs to the NAD-dependent DNA ligase family. LigA subfamily. Mg(2+) is required as a cofactor. Mn(2+) serves as cofactor.

The catalysed reaction is NAD(+) + (deoxyribonucleotide)n-3'-hydroxyl + 5'-phospho-(deoxyribonucleotide)m = (deoxyribonucleotide)n+m + AMP + beta-nicotinamide D-nucleotide.. In terms of biological role, DNA ligase that catalyzes the formation of phosphodiester linkages between 5'-phosphoryl and 3'-hydroxyl groups in double-stranded DNA using NAD as a coenzyme and as the energy source for the reaction. It is essential for DNA replication and repair of damaged DNA. The chain is DNA ligase from Rippkaea orientalis (strain PCC 8801 / RF-1) (Cyanothece sp. (strain PCC 8801)).